The primary structure comprises 239 residues: ATP-dependent dethiobiotin synthetase BioD (239 aa).

An ATP-binding site is contributed by 15 to 20 (EIGKTF). T19 is a binding site for Mg(2+). Residue K40 is part of the active site. ATP is bound by residues D57, 118-121 (EGVG), and 178-179 (NH). Residues D57 and E118 each contribute to the Mg(2+) site.

It belongs to the dethiobiotin synthetase family. As to quaternary structure, homodimer. It depends on Mg(2+) as a cofactor.

The protein localises to the cytoplasm. It carries out the reaction (7R,8S)-7,8-diammoniononanoate + CO2 + ATP = (4R,5S)-dethiobiotin + ADP + phosphate + 3 H(+). It functions in the pathway cofactor biosynthesis; biotin biosynthesis; biotin from 7,8-diaminononanoate: step 1/2. Functionally, catalyzes a mechanistically unusual reaction, the ATP-dependent insertion of CO2 between the N7 and N8 nitrogen atoms of 7,8-diaminopelargonic acid (DAPA, also called 7,8-diammoniononanoate) to form a ureido ring. This chain is ATP-dependent dethiobiotin synthetase BioD, found in Burkholderia cenocepacia (strain HI2424).